Reading from the N-terminus, the 345-residue chain is Platelet-derived growth factor C (345 aa).

The N-terminal stretch at 1 to 22 (MLLLGLLLLTSALAGRRHGAAA) is a signal peptide. A CUB domain is found at 46-163 (HEKIITVTSN…PGFCIHYTLL (118 aa)). N-linked (GlcNAc...) asparagine glycosylation occurs at N55. 4 disulfide bridges follow: C104-C124, C250-C294, C280-C335, and C287-C337.

The protein belongs to the PDGF/VEGF growth factor family. Homodimer; disulfide-linked. Interacts with PDGFRA homodimers, and with heterodimers formed by PDGFRA and PDGFRB. Post-translationally, proteolytic removal of the N-terminal CUB domain releasing the core domain is necessary for unmasking the receptor-binding epitopes of the core domain. Cleavage after basic residues in the hinge region (region connecting the CUB and growth factor domains) gives rise to the receptor-binding form.

Its subcellular location is the secreted. Functionally, growth factor that plays an essential role in the regulation of embryonic development, cell proliferation, cell migration, survival and chemotaxis. Potent mitogen and chemoattractant for cells of mesenchymal origin. Required for normal skeleton formation during embryonic development. Required for normal skin morphogenesis during embryonic development. Plays an important role in wound healing, in angiogenesis and blood vessel development. This Gallus gallus (Chicken) protein is Platelet-derived growth factor C (PDGFC).